A 124-amino-acid chain; its full sequence is Large ribosomal subunit protein bL12 (124 aa).

It belongs to the bacterial ribosomal protein bL12 family. In terms of assembly, homodimer. Part of the ribosomal stalk of the 50S ribosomal subunit. Forms a multimeric L10(L12)X complex, where L10 forms an elongated spine to which 2 to 4 L12 dimers bind in a sequential fashion. Binds GTP-bound translation factors.

Its function is as follows. Forms part of the ribosomal stalk which helps the ribosome interact with GTP-bound translation factors. Is thus essential for accurate translation. The chain is Large ribosomal subunit protein bL12 from Chlorobium chlorochromatii (strain CaD3).